The following is a 121-amino-acid chain: Chorion class CA protein ERA.4 (121 aa).

An N-terminal signal peptide occupies residues 1–23; it reads MSSSFFCFFLFCFQTCLIQNVYS. The interval 24 to 57 is left arm; that stretch reads QCLGRVGPGGPPLGPYGGPLGGPGYGPVGYGGCG. Residues 58–105 are central domain; sequence GYGGSGIGNVAVAGELPVAGSAAVLGQVPVIGAVEFAGPACAVGSVSI. Positions 106–121 are right arm; it reads SGACGPTCGCGGSPYY.

Belongs to the chorion protein family.

This protein is one of many from the eggshell of the silk moth. This chain is Chorion class CA protein ERA.4 (ERA.4), found in Bombyx mori (Silk moth).